The sequence spans 552 residues: Putative lipase ATG15 (552 aa).

Residues 1-26 lie on the Cytoplasmic side of the membrane; the sequence is MLHITEKEQTRGLRQLEKRGKRLLPP. A helical; Signal-anchor for type II membrane protein transmembrane segment spans residues 27 to 49; the sequence is LIKFIWFCLISAACVAATTFYWL. The Lumenal segment spans residues 50–552; the sequence is RLSPVHNIHK…WRFVSHDDKE (503 aa). N-linked (GlcNAc...) asparagine glycosylation is found at asparagine 63, asparagine 147, asparagine 239, asparagine 307, and asparagine 391. The active-site Charge relay system is the serine 409. N-linked (GlcNAc...) asparagine glycosylation occurs at asparagine 526.

This sequence belongs to the AB hydrolase superfamily. Lipase family. In terms of assembly, binds to both phosphatidylinositol (PI) and phosphatidylinositol 3,5-bisphosphate (PIP2).

Its subcellular location is the endosome. The protein resides in the multivesicular body membrane. It localises to the prevacuolar compartment membrane. The catalysed reaction is a triacylglycerol + H2O = a diacylglycerol + a fatty acid + H(+). Its function is as follows. Lipase which is essential for lysis of subvacuolar cytoplasm to vacuole targeted bodies and intravacuolar autophagic bodies. Involved in the lysis of intravacuolar multivesicular body (MVB) vesicles. The intravacuolar membrane disintegration by ATG15 is critical to life span extension. The chain is Putative lipase ATG15 (ATG15) from Lodderomyces elongisporus (strain ATCC 11503 / CBS 2605 / JCM 1781 / NBRC 1676 / NRRL YB-4239) (Yeast).